Consider the following 286-residue polypeptide: Transcription factor egl-46 (286 aa).

The C2H2-type 1; atypical zinc-finger motif lies at 180–200 (CICRLCKVKYEDVFKLAQHKC). 2 C2H2-type zinc fingers span residues 208–230 (YKCPDCDKVFSCPANLASHRRWH) and 248–271 (VSCSTCFNSFPTKKMLKLHSSTCQ).

The protein belongs to the INSM1 family. As to quaternary structure, interacts (via C-terminus) with egl-44 (via N-terminus); the interaction is direct; the interaction may regulate transcription. Expressed in touch cells, HSN cells, ventral cord motor neurons and ciliated ray neurons.

The protein localises to the nucleus. Transcription factor. Represses expression of genes involved in differentiation of touch receptor neurons (TRN), probably acting as a heterodimer with egl-44, perhaps by occupying similar cis-regulatory elements as an unc-86/mec-3 heterodimer. Plays a role in cell fate specification of neurons, including the hook neuron HOB, the gas-sensing neuron BAG and touch receptor neurons. Plays a role in neuron differentiation by repressing the expression of zag-1 in FLP neurons, probably acting as a heterodimer with egl-44; because zag-1 represses expression of egl-46 and egl-44, together these proteins form a bistable, negative-feedback loop that regulates the choice between neuronal fates. Acts downstream of egl-44 to prevent touch cell differentiation in FLP neurons. Involved in male mating behavior, acting in concert with egl-44, via modulation of expression of polycystins lov-1 and pkd-2, homeodomain protein ceh-26, and neuropeptide-like protein nlp-8. Modulates the expression of a subset of terminal differentiation genes involved in O(2)- and CO(2)-sensing, acting in parallel to ets-5 and egl-13. May act upstream of RFX transcription factor daf-19 to regulate gene expression specifically in the HOB neuron. Plays a role in specifying commissural dendrites of the PVD nociceptive neurons, acting in concert with egl-44. In association with egl-44, regulates cell cycle exit in the neuronal Q cell lineage. The protein is Transcription factor egl-46 of Caenorhabditis elegans.